The chain runs to 828 residues: Periplasmic nitrate reductase (828 aa).

Positions 1–31 form a signal peptide, tat-type signal; the sequence is MKLSRRSFMKANAVAAAAAAAGLSVPGVARA. One can recognise a 4Fe-4S Mo/W bis-MGD-type domain in the interval 39–95; the sequence is IKWDKAPCRFCGTGCGVLVGTQQGRIVACQGDPDAPVNRGLNCIKGYFLPKIMYGKD. [4Fe-4S] cluster-binding residues include Cys46, Cys49, Cys53, and Cys81. Residues Lys83, Gln150, Asn175, Cys179, 212-219, 243-247, 262-264, Met372, Gln376, Asn482, 508-509, Lys531, Asp558, and 718-727 each bind Mo-bis(molybdopterin guanine dinucleotide); these read WGSNMAEM, STFQH, QSD, SD, and TGRVLEHWHT. Residue Phe794 coordinates substrate. Asn802 and Lys819 together coordinate Mo-bis(molybdopterin guanine dinucleotide).

It belongs to the prokaryotic molybdopterin-containing oxidoreductase family. NasA/NapA/NarB subfamily. In terms of assembly, component of the periplasmic nitrate reductase NapAB complex composed of NapA and NapB. Requires [4Fe-4S] cluster as cofactor. Mo-bis(molybdopterin guanine dinucleotide) is required as a cofactor. Predicted to be exported by the Tat system. The position of the signal peptide cleavage has not been experimentally proven.

It localises to the periplasm. The enzyme catalyses 2 Fe(II)-[cytochrome] + nitrate + 2 H(+) = 2 Fe(III)-[cytochrome] + nitrite + H2O. Catalytic subunit of the periplasmic nitrate reductase complex NapAB. Receives electrons from NapB and catalyzes the reduction of nitrate to nitrite. The polypeptide is Periplasmic nitrate reductase (Citrobacter koseri (strain ATCC BAA-895 / CDC 4225-83 / SGSC4696)).